The primary structure comprises 337 residues: F420-dependent glucose-6-phosphate dehydrogenase (337 aa).

A coenzyme F420-(gamma-Glu)n-binding site is contributed by aspartate 44. Histidine 45 (proton donor) is an active-site residue. Coenzyme F420-(gamma-Glu)n contacts are provided by residues threonine 81 and threonine 112 to glycine 113. The active-site Proton acceptor is glutamate 114. Coenzyme F420-(gamma-Glu)n contacts are provided by residues asparagine 117, glycine 180–glycine 181, and glycine 183–valine 184. Residues threonine 198, lysine 201, lysine 262, and arginine 286 each contribute to the substrate site.

This sequence belongs to the F420-dependent glucose-6-phosphate dehydrogenase family. Homodimer.

The enzyme catalyses oxidized coenzyme F420-(gamma-L-Glu)(n) + D-glucose 6-phosphate + H(+) = 6-phospho-D-glucono-1,5-lactone + reduced coenzyme F420-(gamma-L-Glu)(n). Functionally, catalyzes the coenzyme F420-dependent oxidation of glucose 6-phosphate (G6P) to 6-phosphogluconolactone. The sequence is that of F420-dependent glucose-6-phosphate dehydrogenase from Kineococcus radiotolerans (strain ATCC BAA-149 / DSM 14245 / SRS30216).